The primary structure comprises 935 residues: Pre-mRNA-splicing factor CWC22 homolog (935 aa).

Residues 1 to 179 (MSRSPSPDSP…PKDLLRTRTG (179 aa)) are disordered. Basic and acidic residues-rich tracts occupy residues 13–25 (VRDD…REQS) and 49–70 (ESSR…DEKM). The segment covering 84 to 148 (QHRRHRESRS…RSPARRRSPV (65 aa)) has biased composition (basic residues). Residues 159–175 (PTEEPEKKKNDPKDLLR) show a composition bias toward basic and acidic residues. One can recognise an MIF4G domain in the interval 212-400 (KKKIHGLVNR…ETAMQIRKDK (189 aa)). A disordered region spans residues 463–489 (ADISSDEEEEVEDDDEESEAEEAPRKT). Over residues 465 to 483 (ISSDEEEEVEDDDEESEAE) the composition is skewed to acidic residues. An MI domain is found at 502 to 633 (AFRREVYLTL…EWKILADVKM (132 aa)). Residues 725 to 935 (KAAQSSSDSS…VGSDDRRRRH (211 aa)) are disordered. Residues 729–763 (SSSDSSSDSSDSSDSSDSSGSSDSSDDSSSSSSSD) show a composition bias toward low complexity. Composition is skewed to basic and acidic residues over residues 780 to 891 (KKKE…DRKE) and 897 to 935 (DRRD…RRRH).

The protein belongs to the CWC22 family.

It localises to the nucleus. Its subcellular location is the nucleus speckle. Required for early embryogenesis and tissue differentiation. Required for pre-mRNA splicing and for exon-junction complex (EJC) assembly. Hinders EIF4A3 from non-specifically binding RNA and escorts it to the splicing machinery to promote EJC assembly on mature mRNAs. Through its role in EJC assembly, required for nonsense-mediated mRNA decay. The protein is Pre-mRNA-splicing factor CWC22 homolog of Caenorhabditis briggsae.